Here is a 328-residue protein sequence, read N- to C-terminus: GMP reductase (328 aa).

The active-site Thioimidate intermediate is C176. Position 205-228 (205-228) interacts with NADP(+); sequence IIADGGIRTHGDVAKSIRFGATMV.

This sequence belongs to the IMPDH/GMPR family. GuaC type 2 subfamily.

The catalysed reaction is IMP + NH4(+) + NADP(+) = GMP + NADPH + 2 H(+). Its function is as follows. Catalyzes the irreversible NADPH-dependent deamination of GMP to IMP. It functions in the conversion of nucleobase, nucleoside and nucleotide derivatives of G to A nucleotides, and in maintaining the intracellular balance of A and G nucleotides. In Bacillus cereus (strain ATCC 14579 / DSM 31 / CCUG 7414 / JCM 2152 / NBRC 15305 / NCIMB 9373 / NCTC 2599 / NRRL B-3711), this protein is GMP reductase.